Here is a 1090-residue protein sequence, read N- to C-terminus: Neurofilament heavy polypeptide (1090 aa).

A head region spans residues 2–98 (MSFGSADALL…AVAARSEKEQ (97 aa)). Ser74 and Ser122 each carry phosphoserine. The region spanning 95–411 (EKEQLQALND…KLLEGEECRI (317 aa)) is the IF rod domain. The coil 1A stretch occupies residues 99–130 (LQALNDRFAGYIDKVRQLEAHNRSLEGEAAAL). Positions 131 to 143 (RQQQAGRAAMGEL) are linker 1. The interval 144 to 242 (YEREVREMRG…QEEVGELLGQ (99 aa)) is coil 1B. A linker 12 region spans residues 243-264 (IQGCGAAQAQAQAEARDALKCD). A coil 2A region spans residues 265 to 286 (VTSALREIRAQLEGHAVQSTLQ). The linker 2 stretch occupies residues 287–290 (SEEW). The coil 2B stretch occupies residues 291–411 (FRVRLDRLSE…KLLEGEECRI (121 aa)). A phosphoserine mark is found at Ser345, Ser416, and Ser419. The interval 412 to 1090 (GFGPSPFSLT…TEDKATKGEK (679 aa)) is tail. The interval 456 to 1090 (EGQTEEIRVT…TEDKATKGEK (635 aa)) is disordered. Over residues 468–495 (VTEEEDKEAQGQEGEEAEEGEEKEEEEG) the composition is skewed to acidic residues. The segment covering 496–506 (AAATSPPAEEA) has biased composition (low complexity). A phosphoserine mark is found at Ser508, Ser523, Ser529, Ser535, Ser541, Ser547, Ser553, Ser559, Ser565, Ser571, Ser577, Ser583, Ser589, Ser595, Ser601, Ser607, Ser613, Ser619, Ser625, Ser631, Ser637, Ser643, Ser649, Ser655, Ser661, Ser667, Ser673, Ser679, Ser685, Ser691, Ser697, Ser703, Ser709, Ser715, Ser721, Ser727, Ser733, Ser739, Ser745, Ser751, Ser757, Ser763, and Ser769. Positions 508 to 579 (SPEKETKSRV…KSPAEAKSPA (72 aa)) are enriched in basic and acidic residues. Tandem repeats lie at residues 522 to 527 (KSPGEA), 528 to 533 (KSPGEA), 534 to 539 (KSPAEA), 540 to 545 (KSPGEA), 546 to 551 (KSPGEA), 552 to 557 (KSPGEA), 558 to 563 (KSPAEP), 564 to 569 (KSPAEP), 570 to 575 (KSPAEA), 576 to 581 (KSPAEP), 582 to 587 (KSPATV), 588 to 593 (KSPGEA), 594 to 599 (KSPSEA), 600 to 605 (KSPAEA), 606 to 611 (KSPAEA), 612 to 617 (KSPAEA), 618 to 623 (KSPAEA), 624 to 629 (KSPAEA), 630 to 635 (KSPAEA), 636 to 641 (KSPATV), 642 to 647 (KSPGEA), 648 to 653 (KSPSEA), 654 to 659 (KSPAEA), 660 to 665 (KSPAEA), 666 to 671 (KSPAEA), 672 to 677 (KSPAEV), 678 to 683 (KSPGEA), 684 to 689 (KSPAEP), 690 to 695 (KSPAEA), 696 to 701 (KSPAEV), 702 to 707 (KSPAEA), 708 to 713 (KSPAEV), 714 to 719 (KSPGEA), 720 to 725 (KSPAAV), 726 to 731 (KSPAEA), 732 to 737 (KSPAAV), 738 to 743 (KSPGEA), 744 to 749 (KSPGEA), 750 to 755 (KSPAEA), 756 to 761 (KSPAEA), 762 to 767 (KSPIEV), and 768 to 773 (KSPEKA). Residues 522–892 (KSPGEAKSPG…KEEVKSPVKE (371 aa)) are 52 X 6 AA approximate tandem repeats of K-S-P-[AGISV]-[EATK]-[APVQ]. Over residues 595-633 (SPSEAKSPAEAKSPAEAKSPAEAKSPAEAKSPAEAKSPA) the composition is skewed to basic and acidic residues. Basic and acidic residues predominate over residues 649–717 (SPSEAKSPAE…KSPAEVKSPG (69 aa)). Residues 745–781 (SPGEAKSPAEAKSPAEAKSPIEVKSPEKAKTPVKEGA) are compositionally biased toward basic and acidic residues. The 43; approximate repeat unit spans residues 774 to 779 (KTPVKE). Tandem repeats lie at residues 782-787 (KSPAEA), 788-793 (KSPEKA), 794-799 (KSPVKE), 808-813 (KSPEKA), 814-819 (KSPVKE), and 833-838 (KSPEAQ). Residues Ser783, Ser789, Ser795, Ser809, Ser815, and Ser834 each carry the phosphoserine modification. Positions 788–834 (KSPEKAKSPVKEDIKPPAEAKSPEKAKSPVKEGAKPPEKAKPLDVKS) are enriched in basic and acidic residues. Residue Thr839 is modified to Phosphothreonine. 2 stretches are compositionally biased toward basic and acidic residues: residues 843 to 964 (EEAK…KAVA) and 974 to 1090 (GVKE…KGEK). Repeat copies occupy residues 858-863 (KSPAKE), 866-871 (KSPEKE), and 887-892 (KSPVKE). 4 positions are modified to phosphoserine: Ser859, Ser867, Ser888, and Ser947.

It belongs to the intermediate filament family. In terms of assembly, forms heterodimers with NEFL; which can further hetero-oligomerize (in vitro). Forms heterodimers with INA (in vitro). There are a number of repeats of the tripeptide K-S-P, NFH is phosphorylated on a number of the serines in this motif. It is thought that phosphorylation of NFH results in the formation of interfilament cross bridges that are important in the maintenance of axonal caliber. In terms of processing, phosphorylation seems to play a major role in the functioning of the larger neurofilament polypeptides (NF-M and NF-H), the levels of phosphorylation being altered developmentally and coincidentally with a change in the neurofilament function. Post-translationally, phosphorylated in the head and rod regions by the PKC kinase PKN1, leading to the inhibition of polymerization. As to expression, expressed in the sciatic nerve (at protein level).

It localises to the cytoplasm. It is found in the cytoskeleton. The protein localises to the cell projection. Its subcellular location is the axon. Its function is as follows. Neurofilaments usually contain three intermediate filament proteins: NEFL, NEFM, and NEFH which are involved in the maintenance of neuronal caliber. NEFH has an important function in mature axons that is not subserved by the two smaller NF proteins. May additionally cooperate with the neuronal intermediate filament proteins PRPH and INA to form neuronal filamentous networks. The sequence is that of Neurofilament heavy polypeptide (Nefh) from Mus musculus (Mouse).